A 247-amino-acid polypeptide reads, in one-letter code: Adiponectin (247 aa).

Residues 1–17 (MLLLQALLFLLILPSHA) form the signal peptide. O-linked (GalNAc...) threonine glycans are attached at residues T23 and T24. A 5-hydroxylysine modification is found at K36. The residue at position 39 (C39) is an S-(2-succinyl)cysteine. Residues 44–105 (AGIPGHPGHN…GFPGTPGRKG (62 aa)) are disordered. The region spanning 45 to 110 (GIPGHPGHNG…PGRKGEPGEA (66 aa)) is the Collagen-like domain. 3 positions are modified to 4-hydroxyproline: P47, P50, and P56. Basic and acidic residues predominate over residues 58–73 (RDGRDGTPGEKGEKGD). 5-hydroxylysine; alternate is present on residues K68, K71, and K80. K68, K71, and K80 each carry an O-linked (Gal...) hydroxylysine; alternate glycan. Position 94 is a 4-hydroxyproline (P94). K104 carries the 5-hydroxylysine; alternate modification. O-linked (Gal...) hydroxylysine; alternate glycosylation occurs at K104. Residues 111–247 (AYVYRSAFSV…TGFLLYHDTN (137 aa)) form the C1q domain.

As to quaternary structure, homomultimer. Forms trimers, hexamers and 12- to 18-mers. The trimers (low molecular weight complexes / LMW) are assembled via non-covalent interactions of the collagen-like domains in a triple helix and hydrophobic interactions within the globular C1q domain. Several trimers can associate to form disulfide-linked hexamers (middle molecular weight complexes / MMW) and larger complexes (higher molecular weight / HMW). The HMW-complex assembly is also modulated by the degree of lysine hydroxylation and glycosylation. LMW, MMW and HMW complexes bind to HBEGF, MMW and HMW complexes bind to PDGFB, and HMW complex binds to FGF2. Interacts with CTRP9 via the C1q domain (heterotrimeric complex). Post-translationally, HMW complexes are more extensively glycosylated than smaller oligomers. Hydroxylation and glycosylation of the lysine residues within the collagen-like domain of adiponectin seem to be critically involved in regulating the formation and/or secretion of HMW complexes and consequently contribute to the insulin-sensitizing activity of adiponectin in hepatocytes. In terms of processing, O-glycosylated. Not N-glycosylated O-linked glycans on hydroxylysine residues consist of Glc-Gal disaccharides bound to the oxygen atom of post-translationally added hydroxyl groups. O-linked glycosylation in the N-terminal is disialylated with the structure Neu5Acalpha2-&gt;8Neu5Acalpha2-&gt;3Gal. Sialylated by alpha 2,8-sialyltransferase III. Succination of Cys-39 by the Krebs cycle intermediate fumarate, which leads to S-(2-succinyl)cysteine residues, inhibits polymerization and secretion of adiponectin. Adiponectin is a major target for succination in both adipocytes and adipose tissue of diabetic mice. It was proposed that succination of proteins is a biomarker of mitochondrial stress and accumulation of Krebs cycle intermediates in adipose tissue in diabetes and that succination of adiponectin may contribute to the decrease in plasma adiponectin in diabetes. In terms of tissue distribution, synthesized exclusively by adipocytes and secreted into plasma.

The protein localises to the secreted. With respect to regulation, polymerization and secretion of adiponectin is inhibited by succination of cysteine residues by the Krebs cycle intermediate fumarate, which leads to S-(2-succinyl)cysteine residues. In terms of biological role, important adipokine involved in the control of fat metabolism and insulin sensitivity, with direct anti-diabetic, anti-atherogenic and anti-inflammatory activities. Stimulates AMPK phosphorylation and activation in the liver and the skeletal muscle, enhancing glucose utilization and fatty-acid combustion. Antagonizes TNF-alpha by negatively regulating its expression in various tissues such as liver and macrophages, and also by counteracting its effects. Inhibits endothelial NF-kappa-B signaling through a cAMP-dependent pathway. May play a role in cell growth, angiogenesis and tissue remodeling by binding and sequestering various growth factors with distinct binding affinities, depending on the type of complex, LMW, MMW or HMW. This is Adiponectin (Adipoq) from Mus musculus (Mouse).